A 419-amino-acid chain; its full sequence is [Butirosin acyl-carrier protein]--L-glutamate ligase (419 aa).

In terms of domain architecture, ATP-grasp spans 144–345; sequence RRLMERNGFN…FVESRVLVFN (202 aa). 174 to 231 provides a ligand contact to ATP; that stretch reads ISAGFSKCVLKVPYGSSGKGLKVIDNERNFRFLLNYIQNRQTNVDLLLEGWHPHRLSL. The Mg(2+) site is built by Asp298, Glu312, and Asn314. Residues Asp298, Glu312, and Asn314 each coordinate Mn(2+).

In terms of assembly, monomer. Requires Mg(2+) as cofactor. It depends on Mn(2+) as a cofactor.

The enzyme catalyses holo-[BtrI ACP] + L-glutamate + ATP = gamma-L-glutamyl-[BtrI ACP] + ADP + phosphate. It carries out the reaction 4-aminobutanoyl-[BtrI ACP] + L-glutamate + ATP = 4-(gamma-L-glutamylamino)butanoyl-[BtrI ACP] + ADP + phosphate + H(+). It functions in the pathway antibiotic biosynthesis; butirosin biosynthesis. ATP-dependent ligase that catalyzes 2 steps in the biosynthesis of the side chain of the aminoglycoside antibiotics in the biosynthetic pathway of butirosin. Mediates the addition of one molecule of L-glutamate to a dedicated acyl-carrier protein. Following decarboxylation of the product by BtrK, adds a second L-glutamate molecule. The sequence is that of [Butirosin acyl-carrier protein]--L-glutamate ligase (btrJ) from Niallia circulans (Bacillus circulans).